The sequence spans 133 residues: Meiotically up-regulated gene 15 protein (133 aa).

The protein resides in the cytoplasm. It localises to the nucleus. Has a role in meiosis. This chain is Meiotically up-regulated gene 15 protein (mug15), found in Schizosaccharomyces pombe (strain 972 / ATCC 24843) (Fission yeast).